The sequence spans 143 residues: Large ribosomal subunit protein uL13 (143 aa).

The protein belongs to the universal ribosomal protein uL13 family. In terms of assembly, part of the 50S ribosomal subunit.

Functionally, this protein is one of the early assembly proteins of the 50S ribosomal subunit, although it is not seen to bind rRNA by itself. It is important during the early stages of 50S assembly. This chain is Large ribosomal subunit protein uL13, found in Solibacter usitatus (strain Ellin6076).